We begin with the raw amino-acid sequence, 258 residues long: 4-hydroxy-tetrahydrodipicolinate reductase (258 aa).

Residue 10–15 (GCLGRM) participates in NAD(+) binding. NADP(+) is bound at residue Lys38. Residues 89–91 (GTT) and 113–116 (AGNM) each bind NAD(+). The Proton donor/acceptor role is filled by His146. Position 147 (His147) interacts with (S)-2,3,4,5-tetrahydrodipicolinate. The active-site Proton donor is the Lys150. 156–157 (GT) provides a ligand contact to (S)-2,3,4,5-tetrahydrodipicolinate.

Belongs to the DapB family.

It is found in the cytoplasm. It catalyses the reaction (S)-2,3,4,5-tetrahydrodipicolinate + NAD(+) + H2O = (2S,4S)-4-hydroxy-2,3,4,5-tetrahydrodipicolinate + NADH + H(+). It carries out the reaction (S)-2,3,4,5-tetrahydrodipicolinate + NADP(+) + H2O = (2S,4S)-4-hydroxy-2,3,4,5-tetrahydrodipicolinate + NADPH + H(+). The protein operates within amino-acid biosynthesis; L-lysine biosynthesis via DAP pathway; (S)-tetrahydrodipicolinate from L-aspartate: step 4/4. Catalyzes the conversion of 4-hydroxy-tetrahydrodipicolinate (HTPA) to tetrahydrodipicolinate. The polypeptide is 4-hydroxy-tetrahydrodipicolinate reductase (Pelagibacter ubique (strain HTCC1062)).